A 1463-amino-acid polypeptide reads, in one-letter code: MSNSFEILMNQLGMPAEMRQAPALAQANIERVVVHKISKVWEFHFVFSNILPIEIFLELKKGLSEEFSKTGNKAVFEIKARSQEFSNQLLQSYYREAFSEGPCASQGFKSLYQNLQVRAEGNQLFIEGSEAIDKEHFKKNHLPNLAKQLEKFGFPTFNCQVEKNDVLTQEQEEAFHAENEQIVQAANEEALRAMEQLEQMAPPPAEEKPVFDFQAKKAAAKPKLDKAEITPMIEVTTEENRLVFEGVVFDVEQKVTRTGRVLINFKMTDYTSSFSMQKWVKNEEEAQKFDLIKKNSWLRVRGNVEMNNFTRDLTMNVQDLQEVVHYERKDLMPEGERRVEFHAHTNMSTMDALPEVEEIVATAAKWGHKAVAITDHGNVQSFPHGYKAAKKAGIQLIYGIEANIVEDRVPIVYNEVEMDLSEATYVVFDVETTGLSAIYNDLIQVAASKMYKGNVIAEFDEFINPGHPLSAFTTELTGITDDHVKNAKPLEQVLQEFQEFCKDTVLVAHNATFDVGFMNANYERHDLPKISQPVIDTLEFARNLYPEYKRHGLGPLTKRFGVALEHHHMANYDAEATGRLLFIFIKEVAEKHGVTDLARLNIDLISPDSYKKARIKHATIYVKNQVGLKNIFKLVSLSNTKYFEGVSRIPRTVLDAHREGLILGSACSEGEVFDVVVSQGVDAAVEVAKYYDFIEVMPPAIYAPLIAKEQVKDMEELQTIIKSLIEVGDRLGKPVLATGNVHYIEPEEEIYREIIVRSLGQGAMINRTIGHGEHAQPAPLPKAHFRTTNEMLDEFAFLGEELARKLVIENTNALAEIFEPVEVVKGDLYTPFIDKAEETVAELTYKKAFEIYGNPLPDIVDLRIEKELTSILGNGFAVIYLASQMLVQRSNERGYLVGSRGSVGSSFVATMIGITEVNPLSPHYVCGQCQYSEFITDGSYGSGFDMPHKDCPNCGHKLSKNGQDIPFETFLGFDGDKVPDIDLNFSGEDQPSAHLDVRDIFGEEYAFRAGTVGTVAAKTAYGFVKGYERDYGKFYRDAEVERLAQGAAGVKRTTGQHPGGIVVIPNYMDVYDFTPVQYPADDVTAEWQTTHFNFHDIDENVLKLDVLGHDDPTMIRKLQDLSGIDPNKIPMDDEGVMALFSGTDVLGVTPEQIGTPTGMLGIPEFGTNFVRGMVDETHPTTFAELLQLSGLSHGTDVWLGNAQDLIKQGIADLSTVIGCRDDIMVYLMHAGLEPKMAFTIMERVRKGLWLKISEEERNGYIEAMKANKVPEWYIESCGKIKYMFPKAHAAAYVMMALRVAYFKVHHPIYYYCAYFSIRAKAFDIKTMGAGLEAIKRRMEEISEKRKNNEASNVEIDLYTTLEIVNEMWERGFKFGKLDLYRSQATEFLIDGDTLIPPFVAMDGLGENVAKQLVRAREEGEFLSKTELRKRGGLSSTLVEKMDEMGILGNMPEDNQLSLFDELF.

The region spanning 425 to 581 is the Exonuclease domain; that stretch reads YVVFDVETTG…YDAEATGRLL (157 aa).

Belongs to the DNA polymerase type-C family. PolC subfamily.

Its subcellular location is the cytoplasm. The enzyme catalyses DNA(n) + a 2'-deoxyribonucleoside 5'-triphosphate = DNA(n+1) + diphosphate. Required for replicative DNA synthesis. This DNA polymerase also exhibits 3' to 5' exonuclease activity. This is DNA polymerase III PolC-type from Streptococcus pneumoniae serotype 2 (strain D39 / NCTC 7466).